Reading from the N-terminus, the 68-residue chain is U-poneritoxin(01)-Om4a (68 aa).

A signal peptide spans 1–25 (MKPSSLTLAFLVVFMMAIMYNSVQA). A propeptide spanning residues 26-39 (EALADADAEAFAEA) is cleaved from the precursor.

The protein belongs to the formicidae venom precursor-01 superfamily. As to quaternary structure, homo- or heterodimer with PLP7 (AC A0A348G6I9); disulfide-linked. In terms of processing, truncated sequences of this peptide have also been found in the venom. It is possible they have been cleaved in the venom. As to expression, expressed by the venom gland.

The protein resides in the secreted. Its function is as follows. This homodimer composed of two cationic amphipathic alpha-helical peptides has antimicrobial activities against E.coli (MIC=3.1 uM), S.aureus (MIC=3.1 uM), and S.cerevisiae (MIC=3.1 uM). It also shows histamine-releasing activity (66.4% at 10 uM) and a weak hemolytic activity (10.5% at 50 uM). This Odontomachus monticola (Trap-jaw ant) protein is U-poneritoxin(01)-Om4a.